The primary structure comprises 1118 residues: MESGDHLGNLFDDMVEEDNDEDSFEEPACEDSFDSQEASSKANEPQNDSFDEPIQSSVSKQSDDANGEDEINEEVIQEQKELDLNEEDFNLLTIEEVPLDVLTARIRRVFTEVTYRAEPAAIALFDVAHKIIFKSTMLDCKRNTVIDSIIEGLISIIVDERERDQGAEEAEHVLMIFIAKLAIKNKSMKCSDLLYKLILLVDRLYLHADSFVRCRIYRLIACLMEEANRYADVMREHGDDAFLSDEDPTESEVMIPSGVKNRWMGKLAKSLLDKSPEVRCKAVIALSLWDHDIECKTTCCDEVTVNDLLWKSVHDVDESVRVNAARRVHIANENDIDKCIDYVETSKDNRVKQAIIVRLASDVSLLSFSEKQRFRLVNLLNNSDSARVQDVIHQLLVESWMKVAGDEIISPSIFPFPDSDNNNIPKEFPSIILEYLDPLVDPTAVYVFMKFATVRFIQKSTVQQACGSLDVEKFMKDLLSMTIPDCERVGLMRRTTFRLIPKDNNDGNEDIRKIFSRIFISRCFVDVIFNFAKGRLDATHLRSRALTFFLPDVTTFVEHLEKFCDAYFHRNMSTDYTCKDLVLYNLLHLMNVATKYGDLHDDKMLYKHALKKILGNSSFVFSSETILTIVMICFDLCKIGDDVKQLCDWMCDTAKQLMLSHEEVLNLEEAMKNDKVLEQMYLRSATMLLATCKHEEVESPTASMSSLFKTIIPALLGNKNEELQQLGLELIGFATSIDFENCEPYLKLTTLLIQRGDEVLTSTGVNTLIKVIKSQGFPKTANAIFQGEEQTEDDCQDALAKVFEKALVSLQGMALVQSVQDCLSMLSYGRYAWSKLMCAIIMLVFQKSNECLPLVKIFASYCKKSIRSDFNKMNLLLGFCRAVGIISKTGEDDSNIKLLEMTELVCECISSVHTIDGDEVIPQKKRKTDNEEELYPEIVLANRMVGRANSHPSSWIIRHVFTAMATSLRLECVPMKIVDTLHELLVDTYTVVRFNSNKTTQIAFKRFLTHCEKVITLHERMNALKLGVDFKKVKKEVICADEDPKSVSSSSSLGRKRGRKRENSEEEEKIDADDSFELFQYVPKSTRTRIRPTVNVEEDQNIKTEIEDSDDLEDSFEL.

3 disordered regions span residues 1–69 (MESG…NGED), 1044–1071 (PKSV…EKID), and 1090–1118 (IRPT…SFEL). The segment covering 13 to 34 (DMVEEDNDEDSFEEPACEDSFD) has biased composition (acidic residues). A compositionally biased stretch (polar residues) spans 35-60 (SQEASSKANEPQNDSFDEPIQSSVSK). The span at 1107-1118 (EDSDDLEDSFEL) shows a compositional bias: acidic residues.

This is an uncharacterized protein from Caenorhabditis elegans.